The following is a 339-amino-acid chain: DNA-directed RNA polymerase subunit alpha (339 aa).

The interval 1–235 is alpha N-terminal domain (alpha-NTD); sequence MTIQKNWQEL…DQLNVFVNFE (235 aa). Positions 251–339 are alpha C-terminal domain (alpha-CTD); that stretch reads FNPAFLKKVD…ELAKRFEDHY (89 aa).

Belongs to the RNA polymerase alpha chain family. Homodimer. The RNAP catalytic core consists of 2 alpha, 1 beta, 1 beta' and 1 omega subunit. When a sigma factor is associated with the core the holoenzyme is formed, which can initiate transcription.

The enzyme catalyses RNA(n) + a ribonucleoside 5'-triphosphate = RNA(n+1) + diphosphate. In terms of biological role, DNA-dependent RNA polymerase catalyzes the transcription of DNA into RNA using the four ribonucleoside triphosphates as substrates. The chain is DNA-directed RNA polymerase subunit alpha from Nitrobacter winogradskyi (strain ATCC 25391 / DSM 10237 / CIP 104748 / NCIMB 11846 / Nb-255).